A 317-amino-acid polypeptide reads, in one-letter code: Regulator of microtubule dynamics protein 1 (317 aa).

At Lys168 the chain carries N6-succinyllysine. TPR repeat units follow at residues 171–207 (AICI…NPKD) and 225–261 (PWYQ…DPNF).

The protein belongs to the RMDN family. Interacts with microtubules.

It is found in the cytoplasm. Its subcellular location is the cytoskeleton. The protein localises to the spindle. It localises to the spindle pole. The sequence is that of Regulator of microtubule dynamics protein 1 (RMDN1) from Bos taurus (Bovine).